A 424-amino-acid polypeptide reads, in one-letter code: Dapdiamide A synthase (424 aa).

An ATP-grasp domain is found at 120-318; it reads QEQLALKGVA…QISKLAQAVL (199 aa). Residue 147 to 209 participates in ATP binding; the sequence is AGHAHWPVVL…QEFLAGEEFV (63 aa). Glu275 and Glu287 together coordinate Mg(2+).

Requires Mg(2+) as cofactor. The cofactor is Mn(2+).

The enzyme catalyses 3-[[[(2R,3R)-3-carboxyoxiran-2-yl]carbonyl]amino]-L-alanine + L-valine + ATP = dapdiamide E + ADP + phosphate + H(+). It carries out the reaction N(3)-fumaramoyl-(S)-2,3-diaminopropanoate + L-valine + ATP = dapdiamide A + ADP + phosphate + H(+). The catalysed reaction is N(3)-fumaramoyl-(S)-2,3-diaminopropanoate + L-isoleucine + ATP = dapdiamide B + ADP + phosphate + H(+). It catalyses the reaction N(3)-fumaramoyl-(S)-2,3-diaminopropanoate + L-leucine + ATP = dapdiamide C + ADP + phosphate + H(+). Its pathway is antibiotic biosynthesis. Involved in dapdiamide antibiotics biosynthesis. Ligates N-beta-fumaramoyl-DAP and valine, isoleucine or leucine to form dapdiamides A, B or C, respectively. Also ligates N-beta-epoxysuccinamoyl-DAP and valine to form dapdiamide E. The chain is Dapdiamide A synthase from Enterobacter agglomerans (Erwinia herbicola).